A 218-amino-acid polypeptide reads, in one-letter code: Glutathione S-transferase Mu 1 (218 aa).

The GST N-terminal domain occupies 2 to 88; the sequence is PMTLGYWDVR…YLARKHGLCG (87 aa). Residues 7-8, 46-50, 59-60, and 72-73 contribute to the glutathione site; these read YW, WLSEK, NL, and QS. In terms of domain architecture, GST C-terminal spans 90-208; the sequence is TEEERIRVDI…KSSRFIRVPV (119 aa). Tyr116 is a binding site for substrate.

The protein belongs to the GST superfamily. Mu family. In terms of assembly, homodimer. Well expressed in rabbit liver, brain and kidney.

It is found in the cytoplasm. It carries out the reaction RX + glutathione = an S-substituted glutathione + a halide anion + H(+). Conjugation of reduced glutathione to a wide number of exogenous and endogenous hydrophobic electrophiles. The protein is Glutathione S-transferase Mu 1 of Oryctolagus cuniculus (Rabbit).